A 379-amino-acid chain; its full sequence is Cytochrome b (379 aa).

4 helical membrane-spanning segments follow: residues 33–53, 77–98, 113–133, and 178–198; these read FGSL…FLAM, WTIR…FIHV, WNIG…GYVL, and FFAL…IHLL. Heme b is bound by residues His-83 and His-97. Residues His-182 and His-196 each coordinate heme b. His-201 lines the a ubiquinone pocket. 4 consecutive transmembrane segments (helical) span residues 226–246, 288–308, 320–340, and 347–367; these read TKDF…TLFY, LGGV…PFLQ, LSQF…WIGG, and FINI…FIMP.

This sequence belongs to the cytochrome b family. The cytochrome bc1 complex contains 11 subunits: 3 respiratory subunits (MT-CYB, CYC1 and UQCRFS1), 2 core proteins (UQCRC1 and UQCRC2) and 6 low-molecular weight proteins (UQCRH/QCR6, UQCRB/QCR7, UQCRQ/QCR8, UQCR10/QCR9, UQCR11/QCR10 and a cleavage product of UQCRFS1). This cytochrome bc1 complex then forms a dimer. Heme b is required as a cofactor.

The protein localises to the mitochondrion inner membrane. In terms of biological role, component of the ubiquinol-cytochrome c reductase complex (complex III or cytochrome b-c1 complex) that is part of the mitochondrial respiratory chain. The b-c1 complex mediates electron transfer from ubiquinol to cytochrome c. Contributes to the generation of a proton gradient across the mitochondrial membrane that is then used for ATP synthesis. In Lepilemur aeeclis (Sportive lemur), this protein is Cytochrome b (MT-CYB).